A 257-amino-acid polypeptide reads, in one-letter code: Imidazole glycerol phosphate synthase subunit HisF (257 aa).

Residues aspartate 11 and aspartate 130 contribute to the active site.

This sequence belongs to the HisA/HisF family. In terms of assembly, heterodimer of HisH and HisF.

The protein resides in the cytoplasm. It carries out the reaction 5-[(5-phospho-1-deoxy-D-ribulos-1-ylimino)methylamino]-1-(5-phospho-beta-D-ribosyl)imidazole-4-carboxamide + L-glutamine = D-erythro-1-(imidazol-4-yl)glycerol 3-phosphate + 5-amino-1-(5-phospho-beta-D-ribosyl)imidazole-4-carboxamide + L-glutamate + H(+). It functions in the pathway amino-acid biosynthesis; L-histidine biosynthesis; L-histidine from 5-phospho-alpha-D-ribose 1-diphosphate: step 5/9. Functionally, IGPS catalyzes the conversion of PRFAR and glutamine to IGP, AICAR and glutamate. The HisF subunit catalyzes the cyclization activity that produces IGP and AICAR from PRFAR using the ammonia provided by the HisH subunit. This Shewanella sp. (strain MR-7) protein is Imidazole glycerol phosphate synthase subunit HisF.